Consider the following 1365-residue polypeptide: Killer toxin-resistance protein 5 (1365 aa).

A signal peptide spans 1-17 (MRLLALVLLLLCAPLRA). 11 N-linked (GlcNAc...) asparagine glycosylation sites follow: N115, N228, N293, N457, N519, N523, N644, N870, N1091, N1150, and N1195. A disordered region spans residues 1334–1365 (FASSPGDEDVPGESVSSKYQDSDNAAPLHDEL). Residues 1347-1356 (SVSSKYQDSD) are compositionally biased toward polar residues. The Prevents secretion from ER signature appears at 1362–1365 (HDEL).

This sequence to D.melanogaster UGGG.

Its subcellular location is the endoplasmic reticulum lumen. In terms of biological role, required for (1-&gt;6)-beta-D-glucan synthesis and normal cell growth. This chain is Killer toxin-resistance protein 5 (KRE5), found in Saccharomyces cerevisiae (strain ATCC 204508 / S288c) (Baker's yeast).